We begin with the raw amino-acid sequence, 227 residues long: Translation initiation factor 6 (227 aa).

It belongs to the eIF-6 family.

Functionally, binds to the 50S ribosomal subunit and prevents its association with the 30S ribosomal subunit to form the 70S initiation complex. The polypeptide is Translation initiation factor 6 (Pyrococcus abyssi (strain GE5 / Orsay)).